The sequence spans 856 residues: V-type proton ATPase subunit a (856 aa).

Over 1–409 (MAPKQDTPFR…NAYGTATYQE (409 aa)) the chain is Cytoplasmic. Residues 410–428 (VNPAIPVIVTFPFLFAVMF) form a helical membrane-spanning segment. The Vacuolar portion of the chain corresponds to 429-430 (GD). Residues 431 to 447 (FGHALIMLCAALAMIYW) traverse the membrane as a helical segment. Residues 448–460 (EKPLKKVTFELFA) are Cytoplasmic-facing. The helical transmembrane segment at 461-490 (MVFYGRYIVLVMAVFSVYTGLIYNDVFSKS) threads the bilayer. Over 491 to 544 (MTLFDSQWKWVVPENFKEGMTVKAVLREPNGYRYPFGLDWRWHGTENELLFINS) the chain is Vacuolar. The chain crosses the membrane as a helical span at residues 545-564 (YKMKMAIILGWAHMTYSLCF). The Cytoplasmic segment spans residues 565–582 (SYINARHFKRPIDIWGNF). A helical membrane pass occupies residues 583–603 (VPGMIFFQSIFGYLVLCIIYK). The Vacuolar segment spans residues 604-648 (WSVDWFGTGRQPPGLLNMLIYMFLQPGTLDGGVELYPGQATVQVI). A helical transmembrane segment spans residues 649 to 668 (LLLLAVIQVPILLFLKPFYL). At 669–738 (RWENNRARAK…EVMIHQVIHT (70 aa)) the chain is on the cytoplasmic side. Residues 689–710 (VSALDEDDEEDPSNGDDYEGAA) form a disordered region. Residues 692 to 707 (LDEDDEEDPSNGDDYE) show a composition bias toward acidic residues. A helical membrane pass occupies residues 739–763 (IEFCLNSVSHTASYLRLWALSLAHQ). At 764–784 (QLSAVLWSMTMAKALESKGLG) the chain is on the vacuolar side. A helical membrane pass occupies residues 785–823 (GAIFLVVAFAMFFVLSVIILIIMEGVSAMLHSLRLAWVE). Residues 824-856 (SFSKFAEFGGWPFTPFSFKQQLEESEELKEYIG) are Cytoplasmic-facing.

It belongs to the V-ATPase 116 kDa subunit family. V-ATPase is a heteromultimeric enzyme composed of a peripheral catalytic V1 complex (components A to H) attached to an integral membrane V0 proton pore complex (components: a, c, c', c'', d, e, f and VOA1).

It is found in the vacuole membrane. Subunit of the V0 complex of vacuolar(H+)-ATPase (V-ATPase), a multisubunit enzyme composed of a peripheral complex (V1) that hydrolyzes ATP and a membrane integral complex (V0) that translocates protons. V-ATPase is responsible for acidifying and maintaining the pH of intracellular compartments. The chain is V-type proton ATPase subunit a (vph-1) from Neurospora crassa (strain ATCC 24698 / 74-OR23-1A / CBS 708.71 / DSM 1257 / FGSC 987).